Here is a 539-residue protein sequence, read N- to C-terminus: CTP synthase (539 aa).

The amidoligase domain stretch occupies residues 1–268 (MADTKYIFVT…DETVLRKVGL (268 aa)). A CTP-binding site is contributed by serine 15. Residue serine 15 participates in UTP binding. Residue 16–21 (SLGKGI) coordinates ATP. L-glutamine is bound at residue tyrosine 56. Aspartate 73 lines the ATP pocket. Positions 73 and 143 each coordinate Mg(2+). Residues 150–152 (DIE), 189–194 (KTKPTQ), and lysine 225 each bind CTP. UTP contacts are provided by residues 189-194 (KTKPTQ) and lysine 225. Residues 294–536 (TIALVGKYVE…IREAIKTRKK (243 aa)) enclose the Glutamine amidotransferase type-1 domain. Residue glycine 356 coordinates L-glutamine. Cysteine 383 serves as the catalytic Nucleophile; for glutamine hydrolysis. Residues 384-387 (LGMQ), glutamate 407, and arginine 464 contribute to the L-glutamine site. Catalysis depends on residues histidine 509 and glutamate 511.

This sequence belongs to the CTP synthase family. In terms of assembly, homotetramer.

It catalyses the reaction UTP + L-glutamine + ATP + H2O = CTP + L-glutamate + ADP + phosphate + 2 H(+). The enzyme catalyses L-glutamine + H2O = L-glutamate + NH4(+). It carries out the reaction UTP + NH4(+) + ATP = CTP + ADP + phosphate + 2 H(+). It participates in pyrimidine metabolism; CTP biosynthesis via de novo pathway; CTP from UDP: step 2/2. Its activity is regulated as follows. Allosterically activated by GTP, when glutamine is the substrate; GTP has no effect on the reaction when ammonia is the substrate. The allosteric effector GTP functions by stabilizing the protein conformation that binds the tetrahedral intermediate(s) formed during glutamine hydrolysis. Inhibited by the product CTP, via allosteric rather than competitive inhibition. Catalyzes the ATP-dependent amination of UTP to CTP with either L-glutamine or ammonia as the source of nitrogen. Regulates intracellular CTP levels through interactions with the four ribonucleotide triphosphates. This Porphyromonas gingivalis (strain ATCC 33277 / DSM 20709 / CIP 103683 / JCM 12257 / NCTC 11834 / 2561) protein is CTP synthase.